The sequence spans 470 residues: UDP-glycosyltransferase 75C1 (470 aa).

The Proton acceptor role is filled by H16. H16 serves as a coordination point for an anthocyanidin. UDP-alpha-D-glucose contacts are provided by Q347, H362, W365, N366, S367, E370, D386, and Q387.

It belongs to the UDP-glycosyltransferase family. Expressed in flowers and fruits, especially in pulp, and, at lower levels, in seeds.

The protein localises to the cytoplasm. It is found in the nucleus. The catalysed reaction is 2-cis-(+)-abscisate + UDP-alpha-D-glucose = beta-D-glucopyranosyl cis-(+)-abscisate + UDP. The enzyme catalyses (indol-3-yl)acetate + UDP-alpha-D-glucose = 1-O-(indol-3-ylacetyl)-beta-D-glucose + UDP. Functionally, glucosyltransferase acting on both abscisic acid (ABA) and auxin (IAA). Required for ABA-mediated fruit ripening, seed germination, and negative responses to drought. In Solanum lycopersicum (Tomato), this protein is UDP-glycosyltransferase 75C1.